The primary structure comprises 449 residues: Tubulin alpha-1 chain (449 aa).

Gln-11, Glu-71, Ser-140, Gly-144, Thr-145, Thr-179, Asn-206, and Asn-228 together coordinate GTP. Residue Glu-71 coordinates Mg(2+). Residue Glu-254 is part of the active site.

This sequence belongs to the tubulin family. As to quaternary structure, dimer of alpha and beta chains. A typical microtubule is a hollow water-filled tube with an outer diameter of 25 nm and an inner diameter of 15 nM. Alpha-beta heterodimers associate head-to-tail to form protofilaments running lengthwise along the microtubule wall with the beta-tubulin subunit facing the microtubule plus end conferring a structural polarity. Microtubules usually have 13 protofilaments but different protofilament numbers can be found in some organisms and specialized cells. Mg(2+) is required as a cofactor.

Its subcellular location is the cytoplasm. It localises to the cytoskeleton. The catalysed reaction is GTP + H2O = GDP + phosphate + H(+). Tubulin is the major constituent of microtubules, a cylinder consisting of laterally associated linear protofilaments composed of alpha- and beta-tubulin heterodimers. Microtubules grow by the addition of GTP-tubulin dimers to the microtubule end, where a stabilizing cap forms. Below the cap, tubulin dimers are in GDP-bound state, owing to GTPase activity of alpha-tubulin. This is Tubulin alpha-1 chain (tubA) from Emericella nidulans (strain FGSC A4 / ATCC 38163 / CBS 112.46 / NRRL 194 / M139) (Aspergillus nidulans).